The chain runs to 228 residues: Large ribosomal subunit protein bL25 (228 aa).

Residues 198 to 228 (AAIAEAQSAEAAEEKAEAEAEATNEKNDTEE) are disordered. Residues 209 to 228 (AEEKAEAEAEATNEKNDTEE) show a composition bias toward basic and acidic residues.

Belongs to the bacterial ribosomal protein bL25 family. CTC subfamily. Part of the 50S ribosomal subunit; part of the 5S rRNA/L5/L18/L25 subcomplex. Contacts the 5S rRNA. Binds to the 5S rRNA independently of L5 and L18.

Its function is as follows. This is one of the proteins that binds to the 5S RNA in the ribosome where it forms part of the central protuberance. This chain is Large ribosomal subunit protein bL25, found in Methylorubrum populi (strain ATCC BAA-705 / NCIMB 13946 / BJ001) (Methylobacterium populi).